A 228-amino-acid polypeptide reads, in one-letter code: 7-cyano-7-deazaguanine synthase (228 aa).

8–18 contacts ATP; it reads LSGGMDSATTL. Zn(2+) contacts are provided by cysteine 188, cysteine 198, cysteine 201, and cysteine 204.

It belongs to the QueC family. Zn(2+) is required as a cofactor.

It catalyses the reaction 7-carboxy-7-deazaguanine + NH4(+) + ATP = 7-cyano-7-deazaguanine + ADP + phosphate + H2O + H(+). It participates in purine metabolism; 7-cyano-7-deazaguanine biosynthesis. Its function is as follows. Catalyzes the ATP-dependent conversion of 7-carboxy-7-deazaguanine (CDG) to 7-cyano-7-deazaguanine (preQ(0)). This Nitrosomonas europaea (strain ATCC 19718 / CIP 103999 / KCTC 2705 / NBRC 14298) protein is 7-cyano-7-deazaguanine synthase.